Here is a 217-residue protein sequence, read N- to C-terminus: Protein LURP-one-related 2 (217 aa).

The protein belongs to the LOR family.

Functionally, might be related to the phospholipid scramblase and tubby-like superfamily of membrane tethered transcription factors. In Arabidopsis thaliana (Mouse-ear cress), this protein is Protein LURP-one-related 2.